We begin with the raw amino-acid sequence, 464 residues long: MAEYRYDVVVIGAGPAGEGAAMNAAKHGKRVAVIEDKSQVGGNCTHMGTIPSKALRHAVKQIIQFNTNTMFRDIGEPRWFSFPRVLQNAERVIGKQVKIRTQFYARNRVDLYRGRASFIDENRIEVRGGLNGKEVLYGKQIVIATGSRPYLPEDVDFTHRRIYNSDSILKLSHTPRTLIIYGAGVIGCEYASIFVGLGVKVDLINPGERLLSFLDGEISDALSYHLRDNGVLVRHNEQYDSVVGDDHGVVLTMKSGKRIRADAFLWCNGRTGNTDNLGLENIGLEPNARGQLAVDNHYRTKIPHVFAAGDVIGWPSLASAAYDQGRSASSEIVKDDFFRFITDVPTGIYTIPEISSVGRTEAELTEAKVPYEVGQAFFKDLARAQITGDTVGMLKLLFHRETMELLGIHCFGDQASEIVHIGQAIMNQPGELNTIEYFVNTTFNYPTMAEAYRVAALNGLNRIF.

35–44 (EDKSQVGGNC) lines the FAD pocket.

Belongs to the class-I pyridine nucleotide-disulfide oxidoreductase family. Requires FAD as cofactor.

It is found in the cytoplasm. It catalyses the reaction NAD(+) + NADPH = NADH + NADP(+). Conversion of NADPH, generated by peripheral catabolic pathways, to NADH, which can enter the respiratory chain for energy generation. This chain is Soluble pyridine nucleotide transhydrogenase, found in Hahella chejuensis (strain KCTC 2396).